Consider the following 247-residue polypeptide: Ribosomal RNA processing protein 36 homolog (247 aa).

4 disordered regions span residues 1–29 (MDNQ…HLKD), 62–89 (RTQG…QRVP), 136–188 (SVEK…RELV), and 218–247 (GKLQ…QVDQ). Positions 8-23 (SSDDESPTDDCSDEGE) are enriched in acidic residues. 2 stretches are compositionally biased toward basic and acidic residues: residues 136 to 153 (SVEK…RKNL) and 164 to 174 (ERSRKSAEAKR). The segment covering 218 to 240 (GKLQKYLTKRRKKTASKDRRHVP) has biased composition (basic residues).

The protein belongs to the RRP36 family.

The protein localises to the nucleus. The protein resides in the nucleolus. Involved in the early processing steps of the pre-rRNA in the maturation pathway leading to the 18S rRNA. The chain is Ribosomal RNA processing protein 36 homolog from Nematostella vectensis (Starlet sea anemone).